We begin with the raw amino-acid sequence, 310 residues long: Bifunctional protein FolD 3, chloroplastic (310 aa).

The transit peptide at 1-48 (MFTDCSSSTTSRLIHLYNRNGVFLPRPSVSQFSLRTTASTWRCTLSIR) directs the protein to the chloroplast.

Belongs to the tetrahydrofolate dehydrogenase/cyclohydrolase family. In terms of assembly, homodimer.

It is found in the plastid. The protein resides in the chloroplast. It catalyses the reaction (6R)-5,10-methylene-5,6,7,8-tetrahydrofolate + NADP(+) = (6R)-5,10-methenyltetrahydrofolate + NADPH. The enzyme catalyses (6R)-5,10-methenyltetrahydrofolate + H2O = (6R)-10-formyltetrahydrofolate + H(+). Its pathway is one-carbon metabolism; tetrahydrofolate interconversion. In terms of biological role, catalyzes the oxidation of 5,10-methylenetetrahydrofolate to 5,10-methenyltetrahydrofolate and then the hydrolysis of 5,10-methenyltetrahydrofolate to 10-formyltetrahydrofolate. The polypeptide is Bifunctional protein FolD 3, chloroplastic (FOLD3) (Arabidopsis thaliana (Mouse-ear cress)).